The chain runs to 272 residues: Bis(5'-nucleosyl)-tetraphosphatase, symmetrical (272 aa).

Belongs to the Ap4A hydrolase family.

The catalysed reaction is P(1),P(4)-bis(5'-adenosyl) tetraphosphate + H2O = 2 ADP + 2 H(+). Its function is as follows. Hydrolyzes diadenosine 5',5'''-P1,P4-tetraphosphate to yield ADP. The sequence is that of Bis(5'-nucleosyl)-tetraphosphatase, symmetrical from Shewanella frigidimarina (strain NCIMB 400).